The sequence spans 128 residues: SH2 domain-containing protein 1A (128 aa).

The SH2 domain occupies 6–102 (VYHGKISRET…GIVIPLQYPV (97 aa)). The tract at residues 67–92 (ETAPGVHKRYFRKIKNLISAFQKPDQ) is interaction with FYN SH3 domain. Lysine 89 carries the N6-acetyllysine modification. Residues 106–128 (SSARSTQGTTGIREDPDVCLKAP) are disordered. Over residues 117–128 (IREDPDVCLKAP) the composition is skewed to basic and acidic residues.

As to quaternary structure, interacts with CD84, CD244, LY9, SLAMF1 and FYN. Interacts with NTRK1, NTRK2 and NTRK3.

The protein localises to the cytoplasm. Functionally, cytoplasmic adapter regulating receptors of the signaling lymphocytic activation molecule (SLAM) family such as SLAMF1, CD244, LY9, CD84, SLAMF6 and SLAMF7. In SLAM signaling seems to cooperate with SH2D1B/EAT-2. Initially it has been proposed that association with SLAMF1 prevents SLAMF1 binding to inhibitory effectors including INPP5D/SHIP1 and PTPN11/SHP-2. However, by simultaneous interactions, recruits FYN which subsequently phosphorylates and activates SLAMF1. Positively regulates CD244/2B4- and CD84-mediated natural killer (NK) cell functions. Can also promote CD48-, SLAMF6 -, LY9-, and SLAMF7-mediated NK cell activation. In the context of NK cell-mediated cytotoxicity enhances conjugate formation with target cells. May also regulate the activity of the neurotrophin receptors NTRK1, NTRK2 and NTRK3. This chain is SH2 domain-containing protein 1A (SH2D1A), found in Macaca mulatta (Rhesus macaque).